The chain runs to 210 residues: MTFTIAIDGPAAAGKGTLSRKIAETYGFHHLDTGLTYRATAKALLDAGLPLDNEAVAEKMALELDLAGLDRAVLSRHEIGEAASKIAVMTPVRRALVKAQKLFAMREPGTVLDGRDIGTVVCPDAPVKLYVTASADVRARRRYDEILANGGNGDYDAIFAEVKKRDERDMGRADSPLRPAEDAHLLDTSEMSIEAAFQAARTIIDAALKR.

Position 9-17 (9-17 (GPAAAGKGT)) interacts with ATP.

It belongs to the cytidylate kinase family. Type 1 subfamily.

It is found in the cytoplasm. It catalyses the reaction CMP + ATP = CDP + ADP. The catalysed reaction is dCMP + ATP = dCDP + ADP. The polypeptide is Cytidylate kinase (Agrobacterium fabrum (strain C58 / ATCC 33970) (Agrobacterium tumefaciens (strain C58))).